We begin with the raw amino-acid sequence, 390 residues long: Magnesium-protoporphyrin IX monomethyl ester [oxidative] cyclase (390 aa).

The protein belongs to the AcsF family. Fe cation is required as a cofactor.

The enzyme catalyses Mg-protoporphyrin IX 13-monomethyl ester + 3 NADPH + 3 O2 + 2 H(+) = 3,8-divinyl protochlorophyllide a + 3 NADP(+) + 5 H2O. It functions in the pathway porphyrin-containing compound metabolism; chlorophyll biosynthesis (light-independent). Functionally, catalyzes the formation of the isocyclic ring in chlorophyll biosynthesis. Mediates the cyclase reaction, which results in the formation of divinylprotochlorophyllide (Pchlide) characteristic of all chlorophylls from magnesium-protoporphyrin IX 13-monomethyl ester (MgPMME). The polypeptide is Magnesium-protoporphyrin IX monomethyl ester [oxidative] cyclase (Prochlorococcus marinus subsp. pastoris (strain CCMP1986 / NIES-2087 / MED4)).